The chain runs to 1057 residues: Carbamoyl phosphate synthase large chain (1057 aa).

Residues 1–401 (MPKREDINKI…ATQKAIRSLD (401 aa)) form a carboxyphosphate synthetic domain region. Residues Arg129, Arg169, Gly175, Gly176, Gln208, Ile210, Glu215, Gly241, Ile242, His243, Gln284, and Glu298 each contribute to the ATP site. Positions 133 to 327 (RALMNDLNEP…IAKVAAKIAV (195 aa)) constitute an ATP-grasp 1 domain. Residues Gln284, Glu298, and Asn300 each contribute to the Mg(2+) site. 3 residues coordinate Mn(2+): Gln284, Glu298, and Asn300. Positions 402–546 (IDINYIGDEE…YSTYELENES (145 aa)) are oligomerization domain. The segment at 547–929 (IVSNRKSIVV…ALYKAFEGAK (383 aa)) is carbamoyl phosphate synthetic domain. An ATP-grasp 2 domain is found at 671–861 (NKLIQANGIR…MARLATRAIL (191 aa)). ATP is bound by residues Arg707, Gln746, Leu748, Glu752, Gly777, Val778, His779, Ser780, Gln820, and Glu832. The Mg(2+) site is built by Gln820, Glu832, and Asn834. The Mn(2+) site is built by Gln820, Glu832, and Asn834. The 128-residue stretch at 930–1057 (MHMPDHGKVL…ESQAFTTLHL (128 aa)) folds into the MGS-like domain. An allosteric domain region spans residues 930 to 1057 (MHMPDHGKVL…ESQAFTTLHL (128 aa)).

The protein belongs to the CarB family. Composed of two chains; the small (or glutamine) chain promotes the hydrolysis of glutamine to ammonia, which is used by the large (or ammonia) chain to synthesize carbamoyl phosphate. Tetramer of heterodimers (alpha,beta)4. Requires Mg(2+) as cofactor. Mn(2+) serves as cofactor.

It carries out the reaction hydrogencarbonate + L-glutamine + 2 ATP + H2O = carbamoyl phosphate + L-glutamate + 2 ADP + phosphate + 2 H(+). The enzyme catalyses hydrogencarbonate + NH4(+) + 2 ATP = carbamoyl phosphate + 2 ADP + phosphate + 2 H(+). It functions in the pathway amino-acid biosynthesis; L-arginine biosynthesis; carbamoyl phosphate from bicarbonate: step 1/1. Its pathway is pyrimidine metabolism; UMP biosynthesis via de novo pathway; (S)-dihydroorotate from bicarbonate: step 1/3. Large subunit of the glutamine-dependent carbamoyl phosphate synthetase (CPSase). CPSase catalyzes the formation of carbamoyl phosphate from the ammonia moiety of glutamine, carbonate, and phosphate donated by ATP, constituting the first step of 2 biosynthetic pathways, one leading to arginine and/or urea and the other to pyrimidine nucleotides. The large subunit (synthetase) binds the substrates ammonia (free or transferred from glutamine from the small subunit), hydrogencarbonate and ATP and carries out an ATP-coupled ligase reaction, activating hydrogencarbonate by forming carboxy phosphate which reacts with ammonia to form carbamoyl phosphate. This chain is Carbamoyl phosphate synthase large chain, found in Pediococcus pentosaceus (strain ATCC 25745 / CCUG 21536 / LMG 10740 / 183-1w).